A 293-amino-acid polypeptide reads, in one-letter code: Protease HtpX (293 aa).

The next 2 helical transmembrane spans lie at 4 to 24 and 33 to 53; these read ISLFLLTNLAVMVVFGIVLSL and AGLMIMAGLFGFGGAFVSLLM. Position 139 (His-139) interacts with Zn(2+). The active site involves Glu-140. His-143 contacts Zn(2+). A run of 2 helical transmembrane segments spans residues 158 to 178 and 193 to 213; these read VVNTFVIFISRILAQLAAGFM and LVYFAVSMVLELVFGVLASII. Position 222 (Glu-222) interacts with Zn(2+).

This sequence belongs to the peptidase M48B family. Zn(2+) serves as cofactor.

The protein resides in the cell inner membrane. This chain is Protease HtpX, found in Sodalis glossinidius (strain morsitans).